A 227-amino-acid chain; its full sequence is MAEKQTLIDAINDRFNSQIEAVVAGVDMVTIELLPTHLLEVCTTLRDDPPFNFELLLDVCGVDYLEYGMSPWRTEETPNTGFSRGFEEVIQEQIIPWNKPRFAVVYHLLSLRHNHRIRLKTYVEGDPPLVPSVIKIWSSADWYEREAFDLYGIVFEGHPDLRRLLTDYGFVGHPFRKDFPLIGEVELRYDAAQQRCVYEPVSIQPRVLVPKVIRVDSRYEKGEKENG.

Belongs to the complex I 30 kDa subunit family. NDH-1 is composed of 14 different subunits. Subunits NuoB, C, D, E, F, and G constitute the peripheral sector of the complex.

It localises to the cell inner membrane. It catalyses the reaction a quinone + NADH + 5 H(+)(in) = a quinol + NAD(+) + 4 H(+)(out). In terms of biological role, NDH-1 shuttles electrons from NADH, via FMN and iron-sulfur (Fe-S) centers, to quinones in the respiratory chain. The immediate electron acceptor for the enzyme in this species is believed to be ubiquinone. Couples the redox reaction to proton translocation (for every two electrons transferred, four hydrogen ions are translocated across the cytoplasmic membrane), and thus conserves the redox energy in a proton gradient. The sequence is that of NADH-quinone oxidoreductase subunit C from Coxiella burnetii (strain RSA 331 / Henzerling II).